The sequence spans 215 residues: ATP phosphoribosyltransferase (215 aa).

The protein belongs to the ATP phosphoribosyltransferase family. Short subfamily. In terms of assembly, heteromultimer composed of HisG and HisZ subunits.

It is found in the cytoplasm. The enzyme catalyses 1-(5-phospho-beta-D-ribosyl)-ATP + diphosphate = 5-phospho-alpha-D-ribose 1-diphosphate + ATP. It participates in amino-acid biosynthesis; L-histidine biosynthesis; L-histidine from 5-phospho-alpha-D-ribose 1-diphosphate: step 1/9. Its function is as follows. Catalyzes the condensation of ATP and 5-phosphoribose 1-diphosphate to form N'-(5'-phosphoribosyl)-ATP (PR-ATP). Has a crucial role in the pathway because the rate of histidine biosynthesis seems to be controlled primarily by regulation of HisG enzymatic activity. The polypeptide is ATP phosphoribosyltransferase (Lachnoclostridium phytofermentans (strain ATCC 700394 / DSM 18823 / ISDg) (Clostridium phytofermentans)).